The sequence spans 443 residues: Thymidine phosphorylase (443 aa).

Belongs to the thymidine/pyrimidine-nucleoside phosphorylase family. In terms of assembly, homodimer.

It carries out the reaction thymidine + phosphate = 2-deoxy-alpha-D-ribose 1-phosphate + thymine. It participates in pyrimidine metabolism; dTMP biosynthesis via salvage pathway; dTMP from thymine: step 1/2. Its function is as follows. The enzymes which catalyze the reversible phosphorolysis of pyrimidine nucleosides are involved in the degradation of these compounds and in their utilization as carbon and energy sources, or in the rescue of pyrimidine bases for nucleotide synthesis. The sequence is that of Thymidine phosphorylase from Shewanella pealeana (strain ATCC 700345 / ANG-SQ1).